The chain runs to 464 residues: Uronate isomerase (464 aa).

It belongs to the metallo-dependent hydrolases superfamily. Uronate isomerase family.

The catalysed reaction is D-glucuronate = D-fructuronate. The enzyme catalyses aldehydo-D-galacturonate = keto-D-tagaturonate. The protein operates within carbohydrate metabolism; pentose and glucuronate interconversion. This Caldicellulosiruptor bescii (strain ATCC BAA-1888 / DSM 6725 / KCTC 15123 / Z-1320) (Anaerocellum thermophilum) protein is Uronate isomerase.